Consider the following 320-residue polypeptide: Lipoyl synthase (320 aa).

Polar residues predominate over residues 1–11 (MGGMNDLSSTP). The tract at residues 1–24 (MGGMNDLSSTPAPEGDRPARQRKP) is disordered. The segment covering 14–24 (EGDRPARQRKP) has biased composition (basic and acidic residues). Positions 53, 58, 64, 79, 83, 86, and 293 each coordinate [4Fe-4S] cluster. Positions 65 to 282 (WTKKHATVMI…GAIARAKGFL (218 aa)) constitute a Radical SAM core domain.

This sequence belongs to the radical SAM superfamily. Lipoyl synthase family. It depends on [4Fe-4S] cluster as a cofactor.

It localises to the cytoplasm. It carries out the reaction [[Fe-S] cluster scaffold protein carrying a second [4Fe-4S](2+) cluster] + N(6)-octanoyl-L-lysyl-[protein] + 2 oxidized [2Fe-2S]-[ferredoxin] + 2 S-adenosyl-L-methionine + 4 H(+) = [[Fe-S] cluster scaffold protein] + N(6)-[(R)-dihydrolipoyl]-L-lysyl-[protein] + 4 Fe(3+) + 2 hydrogen sulfide + 2 5'-deoxyadenosine + 2 L-methionine + 2 reduced [2Fe-2S]-[ferredoxin]. The protein operates within protein modification; protein lipoylation via endogenous pathway; protein N(6)-(lipoyl)lysine from octanoyl-[acyl-carrier-protein]: step 2/2. Functionally, catalyzes the radical-mediated insertion of two sulfur atoms into the C-6 and C-8 positions of the octanoyl moiety bound to the lipoyl domains of lipoate-dependent enzymes, thereby converting the octanoylated domains into lipoylated derivatives. This is Lipoyl synthase from Erythrobacter litoralis (strain HTCC2594).